Reading from the N-terminus, the 279-residue chain is Energy-coupling factor transporter ATP-binding protein EcfA1 (279 aa).

Positions Val-6–Gly-240 constitute an ABC transporter domain. Gly-40–Ser-47 lines the ATP pocket.

Belongs to the ABC transporter superfamily. Energy-coupling factor EcfA family. As to quaternary structure, forms a stable energy-coupling factor (ECF) transporter complex composed of 2 membrane-embedded substrate-binding proteins (S component), 2 ATP-binding proteins (A component) and 2 transmembrane proteins (T component).

It is found in the cell membrane. Its function is as follows. ATP-binding (A) component of a common energy-coupling factor (ECF) ABC-transporter complex. Unlike classic ABC transporters this ECF transporter provides the energy necessary to transport a number of different substrates. In Listeria monocytogenes serotype 4b (strain F2365), this protein is Energy-coupling factor transporter ATP-binding protein EcfA1.